Consider the following 355-residue polypeptide: Peptide chain release factor 1 (355 aa).

Residue Q233 is modified to N5-methylglutamine. Residues E280 to F310 are disordered.

This sequence belongs to the prokaryotic/mitochondrial release factor family. Post-translationally, methylated by PrmC. Methylation increases the termination efficiency of RF1.

Its subcellular location is the cytoplasm. Functionally, peptide chain release factor 1 directs the termination of translation in response to the peptide chain termination codons UAG and UAA. The sequence is that of Peptide chain release factor 1 from Rickettsia canadensis (strain McKiel).